A 180-amino-acid polypeptide reads, in one-letter code: Large ribosomal subunit protein uL16 (180 aa).

It belongs to the universal ribosomal protein uL16 family.

This Hyperthermus butylicus (strain DSM 5456 / JCM 9403 / PLM1-5) protein is Large ribosomal subunit protein uL16.